The primary structure comprises 440 residues: Thymidine phosphorylase (440 aa).

Belongs to the thymidine/pyrimidine-nucleoside phosphorylase family. In terms of assembly, homodimer.

The catalysed reaction is thymidine + phosphate = 2-deoxy-alpha-D-ribose 1-phosphate + thymine. Its pathway is pyrimidine metabolism; dTMP biosynthesis via salvage pathway; dTMP from thymine: step 1/2. The enzymes which catalyze the reversible phosphorolysis of pyrimidine nucleosides are involved in the degradation of these compounds and in their utilization as carbon and energy sources, or in the rescue of pyrimidine bases for nucleotide synthesis. In Erwinia tasmaniensis (strain DSM 17950 / CFBP 7177 / CIP 109463 / NCPPB 4357 / Et1/99), this protein is Thymidine phosphorylase.